We begin with the raw amino-acid sequence, 154 residues long: Interleukin-2 (154 aa).

Positions 1–20 are cleaved as a signal peptide; it reads MCKMQLLSCIALSLVLVANS. O-linked (GalNAc...) threonine glycosylation is present at Thr23. Cysteines 78 and 126 form a disulfide.

The protein belongs to the IL-2 family.

It localises to the secreted. Functionally, cytokine produced by activated CD4-positive helper T-cells and to a lesser extend activated CD8-positive T-cells and natural killer (NK) cells that plays pivotal roles in the immune response and tolerance. Binds to a receptor complex composed of either the high-affinity trimeric IL-2R (IL2RA/CD25, IL2RB/CD122 and IL2RG/CD132) or the low-affinity dimeric IL-2R (IL2RB and IL2RG). Interaction with the receptor leads to oligomerization and conformation changes in the IL-2R subunits resulting in downstream signaling starting with phosphorylation of JAK1 and JAK3. In turn, JAK1 and JAK3 phosphorylate the receptor to form a docking site leading to the phosphorylation of several substrates including STAT5. This process leads to activation of several pathways including STAT, phosphoinositide-3-kinase/PI3K and mitogen-activated protein kinase/MAPK pathways. Functions as a T-cell growth factor and can increase NK-cell cytolytic activity as well. Promotes strong proliferation of activated B-cells and subsequently immunoglobulin production. Plays a pivotal role in regulating the adaptive immune system by controlling the survival and proliferation of regulatory T-cells, which are required for the maintenance of immune tolerance. Moreover, participates in the differentiation and homeostasis of effector T-cell subsets, including Th1, Th2, Th17 as well as memory CD8-positive T-cells. This is Interleukin-2 (IL2) from Mirounga angustirostris (Northern elephant seal).